The primary structure comprises 602 residues: Elongation factor 4 (602 aa).

Residues 2-184 enclose the tr-type G domain; the sequence is KHIRNFSIIA…AIVAKVPAPR (183 aa). GTP is bound by residues 14-19 and 131-134; these read DHGKST and NKMD.

It belongs to the TRAFAC class translation factor GTPase superfamily. Classic translation factor GTPase family. LepA subfamily.

It is found in the cell inner membrane. It catalyses the reaction GTP + H2O = GDP + phosphate + H(+). In terms of biological role, required for accurate and efficient protein synthesis under certain stress conditions. May act as a fidelity factor of the translation reaction, by catalyzing a one-codon backward translocation of tRNAs on improperly translocated ribosomes. Back-translocation proceeds from a post-translocation (POST) complex to a pre-translocation (PRE) complex, thus giving elongation factor G a second chance to translocate the tRNAs correctly. Binds to ribosomes in a GTP-dependent manner. The protein is Elongation factor 4 of Verminephrobacter eiseniae (strain EF01-2).